We begin with the raw amino-acid sequence, 286 residues long: D-tagatose-1,6-bisphosphate aldolase subunit KbaY (286 aa).

Asp82 serves as the catalytic Proton donor. Zn(2+)-binding residues include His83 and His180. Residue Gly181 coordinates dihydroxyacetone phosphate. Residue His208 participates in Zn(2+) binding. Dihydroxyacetone phosphate is bound by residues 209 to 211 (GAS) and 230 to 233 (NVAT).

This sequence belongs to the class II fructose-bisphosphate aldolase family. TagBP aldolase KbaY subfamily. In terms of assembly, homotetramer. Forms a complex with KbaZ. Zn(2+) serves as cofactor.

The enzyme catalyses D-tagatofuranose 1,6-bisphosphate = D-glyceraldehyde 3-phosphate + dihydroxyacetone phosphate. It functions in the pathway carbohydrate metabolism; D-tagatose 6-phosphate degradation; D-glyceraldehyde 3-phosphate and glycerone phosphate from D-tagatose 6-phosphate: step 2/2. In terms of biological role, catalytic subunit of the tagatose-1,6-bisphosphate aldolase KbaYZ, which catalyzes the reversible aldol condensation of dihydroxyacetone phosphate (DHAP or glycerone-phosphate) with glyceraldehyde 3-phosphate (G3P) to produce tagatose 1,6-bisphosphate (TBP). Requires KbaZ subunit for full activity and stability. This chain is D-tagatose-1,6-bisphosphate aldolase subunit KbaY, found in Escherichia coli O17:K52:H18 (strain UMN026 / ExPEC).